A 372-amino-acid polypeptide reads, in one-letter code: Probable dual-specificity RNA methyltransferase RlmN (372 aa).

Residues 1–20 are disordered; that stretch reads MTSLPLTPVNPDAPARRAAM. E112 functions as the Proton acceptor in the catalytic mechanism. Residues 118 to 357 enclose the Radical SAM core domain; the sequence is YPDRVTVCLS…STTVRDTRGR (240 aa). An intrachain disulfide couples C125 to C363. Residues C132, C136, and C139 each contribute to the [4Fe-4S] cluster site. S-adenosyl-L-methionine contacts are provided by residues 187-188, S221, 244-246, and N320; these read GE and SLH. C363 serves as the catalytic S-methylcysteine intermediate.

The protein belongs to the radical SAM superfamily. RlmN family. The cofactor is [4Fe-4S] cluster.

The protein localises to the cytoplasm. The catalysed reaction is adenosine(2503) in 23S rRNA + 2 reduced [2Fe-2S]-[ferredoxin] + 2 S-adenosyl-L-methionine = 2-methyladenosine(2503) in 23S rRNA + 5'-deoxyadenosine + L-methionine + 2 oxidized [2Fe-2S]-[ferredoxin] + S-adenosyl-L-homocysteine. The enzyme catalyses adenosine(37) in tRNA + 2 reduced [2Fe-2S]-[ferredoxin] + 2 S-adenosyl-L-methionine = 2-methyladenosine(37) in tRNA + 5'-deoxyadenosine + L-methionine + 2 oxidized [2Fe-2S]-[ferredoxin] + S-adenosyl-L-homocysteine. Specifically methylates position 2 of adenine 2503 in 23S rRNA and position 2 of adenine 37 in tRNAs. The sequence is that of Probable dual-specificity RNA methyltransferase RlmN from Salinispora tropica (strain ATCC BAA-916 / DSM 44818 / JCM 13857 / NBRC 105044 / CNB-440).